The following is a 218-amino-acid chain: Phosphoenolpyruvate guanylyltransferase (218 aa).

Residues threonine 151, glycine 166, and serine 169 each contribute to the phosphoenolpyruvate site.

This sequence belongs to the CofC family.

The enzyme catalyses phosphoenolpyruvate + GTP + H(+) = enolpyruvoyl-2-diphospho-5'-guanosine + diphosphate. It participates in cofactor biosynthesis; coenzyme F420 biosynthesis. In terms of biological role, guanylyltransferase that catalyzes the activation of phosphoenolpyruvate (PEP) as enolpyruvoyl-2-diphospho-5'-guanosine, via the condensation of PEP with GTP. It is involved in the biosynthesis of coenzyme F420, a hydride carrier cofactor. The protein is Phosphoenolpyruvate guanylyltransferase of Mycobacterium sp. (strain KMS).